The chain runs to 433 residues: Dihydrolipoyllysine-residue acetyltransferase component of pyruvate dehydrogenase complex (433 aa).

In terms of domain architecture, Lipoyl-binding spans 2 to 77 (AFEFRLPDIG…VVGDVIVKID (76 aa)). Lysine 43 is modified (N6-lipoyllysine). Disordered stretches follow at residues 80–134 (DAEE…PSVR) and 164–204 (YLNG…FPET). Basic and acidic residues-rich tracts occupy residues 84-103 (MQFK…KEQE) and 117-126 (EKTEVDESKT). Residues 128–165 (KAMPSVRKYARENGVNIKAVNGSGKNGRITKEDIDAYL) form the Peripheral subunit-binding (PSBD) domain. The span at 166-185 (NGGSSEEGSNTSAASESTSS) shows a compositional bias: low complexity. Histidine 404 is an active-site residue.

Belongs to the 2-oxoacid dehydrogenase family. As to quaternary structure, forms a 24-polypeptide structural core with octahedral symmetry. (R)-lipoate is required as a cofactor.

The catalysed reaction is N(6)-[(R)-dihydrolipoyl]-L-lysyl-[protein] + acetyl-CoA = N(6)-[(R)-S(8)-acetyldihydrolipoyl]-L-lysyl-[protein] + CoA. The pyruvate dehydrogenase complex catalyzes the overall conversion of pyruvate to acetyl-CoA and CO(2). It contains multiple copies of three enzymatic components: pyruvate dehydrogenase (E1), dihydrolipoamide acetyltransferase (E2) and lipoamide dehydrogenase (E3). This is Dihydrolipoyllysine-residue acetyltransferase component of pyruvate dehydrogenase complex (pdhC) from Staphylococcus epidermidis (strain ATCC 35984 / DSM 28319 / BCRC 17069 / CCUG 31568 / BM 3577 / RP62A).